The chain runs to 1820 residues: Cation channel sperm-associated targeting subunit tau (1820 aa).

The region spanning 87–222 (DSEELEITQE…QKGCFIEEVQ (136 aa)) is the C2 domain. Disordered stretches follow at residues 360–383 (SEETNIDEASENTKSNHPEEELEN), 403–443 (LLDN…TEVH), 695–722 (EVSMNSEAREKSSSPLLSIHDKSSSSME), and 838–857 (SSTKKKHLISEVPNSKSGSS). Residues 415-443 (PTLNQSDQDNSTADASKNDESTPSPTEVH) are compositionally biased toward polar residues.

In terms of assembly, component of the CatSper complex or CatSpermasome composed of the core pore-forming members CATSPER1, CATSPER2, CATSPER3 and CATSPER4 as well as auxiliary members CATSPERB, CATSPERG, CATSPERD, CATSPERE, CATSPERZ, C2CD6/CATSPERT, TMEM249, TMEM262 and EFCAB9. HSPA1 may be an additional auxiliary complex member. The core complex members CATSPER1, CATSPER2, CATSPER3 and CATSPER4 form a heterotetrameric channel. The auxiliary CATSPERB, CATSPERG, CATSPERD and CATSPERE subunits form a pavilion-like structure over the pore which stabilizes the complex through interactions with CATSPER4, CATSPER3, CATSPER1 and CATSPER2 respectively. SLCO6C1 interacts with CATSPERE and TMEM262/CATSPERH interacts with CATSPERB, further stabilizing the complex. C2CD6/CATSPERT interacts at least with CATSPERD and is required for targeting the CatSper complex in the flagellar membrane. As to expression, expressed in testis (at protein level).

It localises to the cell projection. It is found in the cilium. The protein localises to the flagellum membrane. Auxiliary component of the CatSper complex, a complex involved in sperm cell hyperactivation. Sperm cell hyperactivation is needed for sperm motility which is essential late in the preparation of sperm for fertilization. Required for CatSper complex targeting and trafficking into the quadrilinear nanodomains. Targets the preassembled CatSper complexes to elongating flagella, where it links the channel-carrying vesicles and motor proteins. In Homo sapiens (Human), this protein is Cation channel sperm-associated targeting subunit tau.